We begin with the raw amino-acid sequence, 192 residues long: MTAQSIDNILSSSEKNVKQWYVVHTASGAEKRIKEDMLRKIAKQNMTHFFEDILIPVFGVSEVKRGKNVKVEKKLMPSYILIKMNMTDKSWHLVKNISGVTGFLGSKTTPKALTESEIQNIFNNLEAEAKEAKNSKLYEVGEIVTVTDGPFETFMGTVEEIDQEKNRLKVSVAIFGKATPIELNFNQVKKND.

One can recognise a KOW domain in the interval valine 140 to leucine 168.

It belongs to the NusG family.

In terms of biological role, participates in transcription elongation, termination and antitermination. The protein is Transcription termination/antitermination protein NusG of Rickettsia conorii (strain ATCC VR-613 / Malish 7).